A 226-amino-acid chain; its full sequence is Deoxyribose-phosphate aldolase (226 aa).

The active-site Proton donor/acceptor is the E96. K157 serves as the catalytic Schiff-base intermediate with acetaldehyde. The active-site Proton donor/acceptor is K185.

This sequence belongs to the DeoC/FbaB aldolase family. DeoC type 1 subfamily.

Its subcellular location is the cytoplasm. The enzyme catalyses 2-deoxy-D-ribose 5-phosphate = D-glyceraldehyde 3-phosphate + acetaldehyde. The protein operates within carbohydrate degradation; 2-deoxy-D-ribose 1-phosphate degradation; D-glyceraldehyde 3-phosphate and acetaldehyde from 2-deoxy-alpha-D-ribose 1-phosphate: step 2/2. In terms of biological role, catalyzes a reversible aldol reaction between acetaldehyde and D-glyceraldehyde 3-phosphate to generate 2-deoxy-D-ribose 5-phosphate. This chain is Deoxyribose-phosphate aldolase, found in Gloeobacter violaceus (strain ATCC 29082 / PCC 7421).